Consider the following 83-residue polypeptide: MSIFNYFLKKEKKSSASLAKERLQIIVAHERSKRQQPDYLPLMQKEIMDVIRKYVNIDEEQVIVQLDNNEDCSVLELNITLPE.

This sequence belongs to the MinE family.

Functionally, prevents the cell division inhibition by proteins MinC and MinD at internal division sites while permitting inhibition at polar sites. This ensures cell division at the proper site by restricting the formation of a division septum at the midpoint of the long axis of the cell. This is Cell division topological specificity factor from Pseudoalteromonas atlantica (strain T6c / ATCC BAA-1087).